Here is a 331-residue protein sequence, read N- to C-terminus: Glycerol-3-phosphate dehydrogenase [NAD(P)+] (331 aa).

NADPH-binding residues include Ser-10, Trp-11, and Lys-101. The sn-glycerol 3-phosphate site is built by Lys-101, Gly-132, and Ser-134. Ala-136 serves as a coordination point for NADPH. Lys-188, Asp-241, Ser-251, Arg-252, and Asn-253 together coordinate sn-glycerol 3-phosphate. Lys-188 serves as the catalytic Proton acceptor. Arg-252 is an NADPH binding site. Val-276 and Glu-278 together coordinate NADPH.

This sequence belongs to the NAD-dependent glycerol-3-phosphate dehydrogenase family.

The protein localises to the cytoplasm. The enzyme catalyses sn-glycerol 3-phosphate + NAD(+) = dihydroxyacetone phosphate + NADH + H(+). It catalyses the reaction sn-glycerol 3-phosphate + NADP(+) = dihydroxyacetone phosphate + NADPH + H(+). The protein operates within membrane lipid metabolism; glycerophospholipid metabolism. Its function is as follows. Catalyzes the reduction of the glycolytic intermediate dihydroxyacetone phosphate (DHAP) to sn-glycerol 3-phosphate (G3P), the key precursor for phospholipid synthesis. The protein is Glycerol-3-phosphate dehydrogenase [NAD(P)+] of Acholeplasma laidlawii (strain PG-8A).